A 173-amino-acid chain; its full sequence is Adenine phosphoribosyltransferase (173 aa).

The protein belongs to the purine/pyrimidine phosphoribosyltransferase family. Homodimer.

The protein localises to the cytoplasm. The catalysed reaction is AMP + diphosphate = 5-phospho-alpha-D-ribose 1-diphosphate + adenine. The protein operates within purine metabolism; AMP biosynthesis via salvage pathway; AMP from adenine: step 1/1. In terms of biological role, catalyzes a salvage reaction resulting in the formation of AMP, that is energically less costly than de novo synthesis. The chain is Adenine phosphoribosyltransferase from Desulfitobacterium hafniense (strain Y51).